The chain runs to 567 residues: Major facilitator superfamily transporter MG061 (567 aa).

The next 12 helical transmembrane spans lie at 15-35 (ITLW…WFVI), 78-98 (WTIT…VLKF), 104-124 (VLIM…GDPL), 193-213 (GYAL…TLVV), 230-250 (ILSN…FTPF), 264-284 (VYIM…FLWF), 321-341 (LIGV…PAWF), 363-383 (TGLA…FVVF), 405-425 (IVVL…SAAG), 426-446 (FALI…LSSS), 462-482 (LPIL…LFDI), and 503-523 (PGVI…NLIV).

The protein belongs to the major facilitator superfamily.

The protein localises to the cell membrane. In Mycoplasma genitalium (strain ATCC 33530 / DSM 19775 / NCTC 10195 / G37) (Mycoplasmoides genitalium), this protein is Major facilitator superfamily transporter MG061.